The sequence spans 310 residues: Ribosomal RNA small subunit methyltransferase H (310 aa).

Residues 32–34 (GGH), Asp-52, Phe-79, Asp-100, and Gln-107 contribute to the S-adenosyl-L-methionine site.

Belongs to the methyltransferase superfamily. RsmH family.

Its subcellular location is the cytoplasm. The enzyme catalyses cytidine(1402) in 16S rRNA + S-adenosyl-L-methionine = N(4)-methylcytidine(1402) in 16S rRNA + S-adenosyl-L-homocysteine + H(+). Specifically methylates the N4 position of cytidine in position 1402 (C1402) of 16S rRNA. The polypeptide is Ribosomal RNA small subunit methyltransferase H (Bacillus cereus (strain G9842)).